The sequence spans 573 residues: NEDD4-binding protein 3-A (573 aa).

Disordered stretches follow at residues 168–216 (LNTM…INSL) and 382–407 (LRGE…EDSK). Composition is skewed to polar residues over residues 184 to 196 (QPSN…QSES) and 207 to 216 (DSRQNSINSL). A coiled-coil region spans residues 289–539 (VEDVARQLEE…KEIQSSYREM (251 aa)).

Belongs to the N4BP3 family.

Its subcellular location is the cytoplasmic vesicle. It is found in the cell projection. The protein localises to the axon. The protein resides in the dendrite. Functionally, plays a role in axon and dendrite arborization during cranial nerve development. Also important for neural crest migration and early development of other anterior structures including eye, brain and cranial cartilage. This Xenopus laevis (African clawed frog) protein is NEDD4-binding protein 3-A.